The chain runs to 1122 residues: Protein phosphatase 1 regulatory subunit 3A (1122 aa).

The segment at 32-58 (TFQPGFSPQPSRRGSDSSEDIYLDTPS) is disordered. Phosphoserine; by GSK3 occurs at positions 38 and 42. Ser-46 bears the Phosphoserine; by PKA and ISPK mark. Phosphoserine is present on Ser-49. The residue at position 56 (Thr-56) is a Phosphothreonine. The short motif at 62 to 65 (RRVS) is the PP1-binding motif element. Residue Ser-65 is modified to Phosphoserine; by PKA. Positions 122–230 (QLQIQKAILE…NNNGTNYTFI (109 aa)) constitute a CBM21 domain. 4 disordered regions span residues 332–351 (STASRDERNTFSTDPVNFPN), 395–422 (SSGDDCTHQPSEETTSNMGEIKPSLGDT), 496–516 (CLKESTEEGSSKEDYYGNGKD), and 640–668 (GINSEDQDNSPQHKQSWNVLESQGKSREN). Composition is skewed to basic and acidic residues over residues 395-405 (SSGDDCTHQPS) and 499-516 (ESTEEGSSKEDYYGNGKD). A compositionally biased stretch (polar residues) spans 640-662 (GINSEDQDNSPQHKQSWNVLESQ). Residue Ser-844 is modified to Phosphoserine. Positions 963–977 (IEKHPYPESKPEEVS) are enriched in basic and acidic residues. 2 disordered regions span residues 963–983 (IEKHPYPESKPEEVSRSSGIV) and 1025–1058 (RHENEGLVSSGQSLYTSGEKESDSSASTSLPVEE). Polar residues-rich tracts occupy residues 1031–1040 (LVSSGQSLYT) and 1048–1058 (SSASTSLPVEE). Residues 1078 to 1098 (YFLLFLIFLITVYHYDLMIGL) form a helical membrane-spanning segment.

Interacts with PPP1CC catalytic subunit of PP1, and associates with glycogen. In terms of processing, phosphorylation at Ser-46 by ISPK stimulates the dephosphorylation of glycogen synthase and phosphorylase kinase. As to expression, skeletal muscle and heart.

Its subcellular location is the membrane. In terms of biological role, seems to act as a glycogen-targeting subunit for PP1. PP1 is essential for cell division, and participates in the regulation of glycogen metabolism, muscle contractility and protein synthesis. Plays an important role in glycogen synthesis but is not essential for insulin activation of glycogen synthase. The chain is Protein phosphatase 1 regulatory subunit 3A (PPP1R3A) from Homo sapiens (Human).